The primary structure comprises 544 residues: Homeobox protein B-H1 (544 aa).

Over residues serine 53 to glycine 70 the composition is skewed to low complexity. Disordered regions lie at residues serine 53–asparagine 73, tyrosine 92–alanine 179, glycine 236–aspartate 308, and alanine 471–valine 544. Residues glutamine 95–asparagine 105 are compositionally biased toward basic residues. The span at asparagine 106–asparagine 131 shows a compositional bias: low complexity. Residues threonine 156–leucine 172 are compositionally biased toward basic residues. The span at aspartate 247–aspartate 262 shows a compositional bias: acidic residues. Over residues methionine 266–asparagine 282 the composition is skewed to basic and acidic residues. Positions serine 283–serine 293 are enriched in polar residues. Residues glutamine 299 to threonine 358 constitute a DNA-binding region (homeobox). The span at glycine 476–serine 485 shows a compositional bias: pro residues. The span at proline 492 to alanine 506 shows a compositional bias: low complexity. Residues serine 507–proline 516 show a composition bias toward pro residues.

The protein belongs to the Antp homeobox family. As to expression, B-H1 and B-H2 are abundant in the eye-antenna imaginal disk. Expressed in R1 and R6 cells throughout larval stage until 30 hours after puparium formation, at which time expression is seen in the anterior and posterior primary pigment cells. Coexpressed in embryonic glial cells, neurons of the CNS and PNS, most latitudinal anterior cells of the developing notum and the central circular region of the leg and antennal imaginal disk throughout larval development.

Its subcellular location is the nucleus. In terms of biological role, B-H1 and B-H2 are regulated by members of the wg signaling pathway; wg and dpp. B-H1 and B-H2 are coexpressed and functionally required in R1 and R6 receptor cells and primary pigment cells for normal eye development. Coexpression is also required for the fate determination of external sensory organs, formation of notal microchaetae, formation of presutural macrochaetae, antennal development and for distal leg morphogenesis; segmentation and specification of tarsal segments 3-5. This Drosophila melanogaster (Fruit fly) protein is Homeobox protein B-H1 (B-H1).